Here is a 225-residue protein sequence, read N- to C-terminus: Urease accessory protein UreF (225 aa).

The protein belongs to the UreF family. In terms of assembly, ureD, UreF and UreG form a complex that acts as a GTP-hydrolysis-dependent molecular chaperone, activating the urease apoprotein by helping to assemble the nickel containing metallocenter of UreC. The UreE protein probably delivers the nickel.

Its subcellular location is the cytoplasm. Functionally, required for maturation of urease via the functional incorporation of the urease nickel metallocenter. The sequence is that of Urease accessory protein UreF from Arthrobacter sp. (strain FB24).